The sequence spans 441 residues: Tol-Pal system protein TolB (441 aa).

A signal peptide spans 1–23 (MRNAIATVLLGLAMLLPVGAVQA). Residues 420–441 (RNLKPVKTPDGASDPSWSPLQN) form a disordered region.

It belongs to the TolB family. As to quaternary structure, the Tol-Pal system is composed of five core proteins: the inner membrane proteins TolA, TolQ and TolR, the periplasmic protein TolB and the outer membrane protein Pal. They form a network linking the inner and outer membranes and the peptidoglycan layer.

It is found in the periplasm. Its function is as follows. Part of the Tol-Pal system, which plays a role in outer membrane invagination during cell division and is important for maintaining outer membrane integrity. In Ruegeria sp. (strain TM1040) (Silicibacter sp.), this protein is Tol-Pal system protein TolB.